Reading from the N-terminus, the 107-residue chain is Alpha-elapitoxin-Al2a (107 aa).

The N-terminal stretch at 1–21 (MKTLLLTLVVVTIVCLDLGDS) is a signal peptide. Cystine bridges form between cysteine 24-cysteine 41, cysteine 34-cysteine 62, cysteine 47-cysteine 51, cysteine 66-cysteine 77, and cysteine 78-cysteine 83.

It belongs to the three-finger toxin family. Long-chain subfamily. Type II alpha-neurotoxin sub-subfamily. In terms of tissue distribution, expressed by the venom gland.

It localises to the secreted. Functionally, binds with high affinity to muscular (alpha-1/CHRNA1) and neuronal (alpha-7/CHRNA7) nicotinic acetylcholine receptor (nAChR) and inhibits acetylcholine from binding to the receptor, thereby impairing neuromuscular and neuronal transmission. This Austrelaps labialis (Pygmy copperhead) protein is Alpha-elapitoxin-Al2a.